Reading from the N-terminus, the 202-residue chain is Imidazole glycerol phosphate synthase subunit HisH (202 aa).

In terms of domain architecture, Glutamine amidotransferase type-1 spans 3-202; the sequence is RIVILDYGLG…KILKNFVDMC (200 aa). Cysteine 79 serves as the catalytic Nucleophile. Residues histidine 183 and glutamate 185 contribute to the active site.

As to quaternary structure, heterodimer of HisH and HisF.

It is found in the cytoplasm. It carries out the reaction 5-[(5-phospho-1-deoxy-D-ribulos-1-ylimino)methylamino]-1-(5-phospho-beta-D-ribosyl)imidazole-4-carboxamide + L-glutamine = D-erythro-1-(imidazol-4-yl)glycerol 3-phosphate + 5-amino-1-(5-phospho-beta-D-ribosyl)imidazole-4-carboxamide + L-glutamate + H(+). The enzyme catalyses L-glutamine + H2O = L-glutamate + NH4(+). Its pathway is amino-acid biosynthesis; L-histidine biosynthesis; L-histidine from 5-phospho-alpha-D-ribose 1-diphosphate: step 5/9. Its function is as follows. IGPS catalyzes the conversion of PRFAR and glutamine to IGP, AICAR and glutamate. The HisH subunit catalyzes the hydrolysis of glutamine to glutamate and ammonia as part of the synthesis of IGP and AICAR. The resulting ammonia molecule is channeled to the active site of HisF. The polypeptide is Imidazole glycerol phosphate synthase subunit HisH (Methanosarcina barkeri (strain Fusaro / DSM 804)).